Reading from the N-terminus, the 224-residue chain is DNA repair and recombination protein RadB (224 aa).

Belongs to the eukaryotic RecA-like protein family. RadB subfamily.

Its function is as follows. Involved in DNA repair and in homologous recombination. May regulate the cleavage reactions of the branch-structured DNA. Has a very weak ATPase activity that is not stimulated by DNA. Binds DNA but does not promote DNA strands exchange. This chain is DNA repair and recombination protein RadB, found in Thermococcus onnurineus (strain NA1).